A 56-amino-acid chain; its full sequence is uncharacterized protein (56 aa).

The span at 21-38 (HTHTPHPHHTHTHTHHTP) shows a compositional bias: basic residues. The interval 21–40 (HTHTPHPHHTHTHTHHTPTH) is disordered.

This is an uncharacterized protein from Saccharomyces cerevisiae (strain ATCC 204508 / S288c) (Baker's yeast).